A 382-amino-acid chain; its full sequence is Chaperone protein DnaJ 1 (382 aa).

In terms of domain architecture, J spans 4 to 68; that stretch reads DYYGILGVDR…DKRRIVDMGG (65 aa). The segment at 134 to 216 adopts a CR-type zinc-finger fold; the sequence is GAKKDLTLDT…CAGDGRVRAR (83 aa). Cysteine 147, cysteine 150, cysteine 164, cysteine 167, cysteine 190, cysteine 193, cysteine 204, and cysteine 207 together coordinate Zn(2+). 4 CXXCXGXG motif repeats span residues 147-154, 164-171, 190-197, and 204-211; these read CTKCHGSG, CGTCNGAG, CHTCDGTG, and CTECAGDG.

It belongs to the DnaJ family. As to quaternary structure, homodimer. Requires Zn(2+) as cofactor.

It localises to the cytoplasm. Functionally, participates actively in the response to hyperosmotic and heat shock by preventing the aggregation of stress-denatured proteins and by disaggregating proteins, also in an autonomous, DnaK-independent fashion. Unfolded proteins bind initially to DnaJ; upon interaction with the DnaJ-bound protein, DnaK hydrolyzes its bound ATP, resulting in the formation of a stable complex. GrpE releases ADP from DnaK; ATP binding to DnaK triggers the release of the substrate protein, thus completing the reaction cycle. Several rounds of ATP-dependent interactions between DnaJ, DnaK and GrpE are required for fully efficient folding. Also involved, together with DnaK and GrpE, in the DNA replication of plasmids through activation of initiation proteins. The protein is Chaperone protein DnaJ 1 of Corynebacterium glutamicum (strain ATCC 13032 / DSM 20300 / JCM 1318 / BCRC 11384 / CCUG 27702 / LMG 3730 / NBRC 12168 / NCIMB 10025 / NRRL B-2784 / 534).